Reading from the N-terminus, the 199-residue chain is OPA3-like protein (199 aa).

A coiled-coil region spans residues 98-141; the sequence is RSSEKDKKKEEALQNRFKNLEEKLEVQQETINNLTNVIEAIQSS.

The protein belongs to the OPA3 family.

This is OPA3-like protein from Dictyostelium discoideum (Social amoeba).